The following is a 245-amino-acid chain: Anti-Pycsar protein Apyc1 (245 aa).

The interval 19–219 (FNNNALLYAG…EIQSQILLKH (201 aa)) is beta-lactamase-like. Zn(2+) is bound by residues histidine 61, histidine 63, aspartate 65, histidine 66, histidine 145, aspartate 165, and histidine 219.

The protein belongs to the anti-Pycsar protein Apyc1 family. As to quaternary structure, homodimer. It depends on Zn(2+) as a cofactor.

It catalyses the reaction 3',5'-cyclic CMP + H2O = CMP + H(+). It carries out the reaction 3',5'-cyclic UMP + H2O = UMP + H(+). Functionally, counteracts the endogenous Pycsar antiviral defense system. Phosphodiesterase that enables metal-dependent hydrolysis of host cyclic nucleotide Pycsar defense signals such as cCMP and cUMP. This chain is Anti-Pycsar protein Apyc1, found in Paenibacillus sp. (strain J14).